Consider the following 245-residue polypeptide: Carbohydrate deacetylase (245 aa).

Mg(2+)-binding residues include His59 and His125.

This sequence belongs to the YdjC deacetylase family. Homodimer. Mg(2+) serves as cofactor.

Its function is as follows. Probably catalyzes the deacetylation of acetylated carbohydrates an important step in the degradation of oligosaccharides. The chain is Carbohydrate deacetylase from Listeria welshimeri serovar 6b (strain ATCC 35897 / DSM 20650 / CCUG 15529 / CIP 8149 / NCTC 11857 / SLCC 5334 / V8).